Here is a 544-residue protein sequence, read N- to C-terminus: pH-responsive protein 2 (544 aa).

Residues 1 to 22 (MLLKSLFPSILAATSFVSSVAA) form the signal peptide. 2 N-linked (GlcNAc...) asparagine glycosylation sites follow: Asn40 and Asn59. The cysteines at positions 72 and 101 are disulfide-linked. An N-linked (GlcNAc...) asparagine glycan is attached at Asn147. Disulfide bonds link Cys214–Cys347, Cys232–Cys263, Cys369–Cys420, Cys378–Cys444, and Cys397–Cys402. Residue Asn408 is glycosylated (N-linked (GlcNAc...) asparagine). The disordered stretch occupies residues 469-514 (GSSGLGTVSGTVRTDTSQSTSDSGSGSSSSSSSSSSSSSSGSSGSK). Ser515 is lipidated: GPI-anchor amidated serine. A propeptide spans 516–544 (AASIVSVNLLTKIATIGISIVVGFGLITM) (removed in mature form).

The protein belongs to the glycosyl hydrolase 72 family.

Its subcellular location is the cell membrane. Functionally, required for apical cell growth and plays an essential role in morphogenesis. May be integral to the pathogenic ability of the organism. This chain is pH-responsive protein 2 (PHR2), found in Candida albicans (strain SC5314 / ATCC MYA-2876) (Yeast).